Reading from the N-terminus, the 319-residue chain is MRHLLSVTDLDRTAATELLDEAERFEQALLGREVHKLPTLRGRTVMTVFYENSTRTRVSFEVAGKWMSADVINVSASSSSVSKGESLRDTALTLHAAGADALIVRHPASGAAHQIARWMDGWARESGRSHGPAIVNAGDGMHEHPTQALLDALTLRQRLGDIEGKRVVIVGDILHSRVARSNVFLLHTLGAEVVLVAPRTLLPVGVQSWPARVSHHLDAELPGADAVLMLRVQAERMNGGFFPSAREYSVNYGLSERRLALLAEHAVVMHPGPMLRGMEIASAVADSPQAAVLQQVTNGVHLRMAVLFRLLVGAQEAIA.

Residues R55 and T56 each contribute to the carbamoyl phosphate site. K83 contacts L-aspartate. Carbamoyl phosphate contacts are provided by R105, H144, and Q147. L-aspartate contacts are provided by R177 and R231. G272 and P273 together coordinate carbamoyl phosphate.

The protein belongs to the aspartate/ornithine carbamoyltransferase superfamily. ATCase family. In terms of assembly, heterododecamer (2C3:3R2) of six catalytic PyrB chains organized as two trimers (C3), and six regulatory PyrI chains organized as three dimers (R2).

It carries out the reaction carbamoyl phosphate + L-aspartate = N-carbamoyl-L-aspartate + phosphate + H(+). The protein operates within pyrimidine metabolism; UMP biosynthesis via de novo pathway; (S)-dihydroorotate from bicarbonate: step 2/3. Its function is as follows. Catalyzes the condensation of carbamoyl phosphate and aspartate to form carbamoyl aspartate and inorganic phosphate, the committed step in the de novo pyrimidine nucleotide biosynthesis pathway. The polypeptide is Aspartate carbamoyltransferase catalytic subunit (Nocardia farcinica (strain IFM 10152)).